The sequence spans 100 residues: ATP-dependent Clp protease adapter protein ClpS (100 aa).

This sequence belongs to the ClpS family. As to quaternary structure, binds to the N-terminal domain of the chaperone ClpA.

In terms of biological role, involved in the modulation of the specificity of the ClpAP-mediated ATP-dependent protein degradation. In Corynebacterium glutamicum (strain R), this protein is ATP-dependent Clp protease adapter protein ClpS.